Consider the following 407-residue polypeptide: Tryptophan 2,3-dioxygenase B (407 aa).

Substrate is bound by residues Phe-71 to His-75 and Arg-143. His-327 serves as a coordination point for heme. Position 341 (Thr-341) interacts with substrate.

Belongs to the tryptophan 2,3-dioxygenase family. In terms of assembly, homotetramer. Dimer of dimers. It depends on heme as a cofactor.

The enzyme catalyses L-tryptophan + O2 = N-formyl-L-kynurenine. It functions in the pathway amino-acid degradation; L-tryptophan degradation via kynurenine pathway; L-kynurenine from L-tryptophan: step 1/2. Functionally, heme-dependent dioxygenase that catalyzes the oxidative cleavage of the L-tryptophan (L-Trp) pyrrole ring and converts L-tryptophan to N-formyl-L-kynurenine. Catalyzes the oxidative cleavage of the indole moiety. This chain is Tryptophan 2,3-dioxygenase B, found in Danio rerio (Zebrafish).